Consider the following 334-residue polypeptide: Holliday junction branch migration complex subunit RuvB (334 aa).

The tract at residues 4–184 (ADRLIQPQLQ…FGIPLRLEFY (181 aa)) is large ATPase domain (RuvB-L). ATP-binding positions include arginine 24, glycine 65, lysine 68, threonine 69, threonine 70, 131 to 133 (EDY), arginine 174, tyrosine 184, and arginine 221. Residue threonine 69 participates in Mg(2+) binding. The small ATPAse domain (RuvB-S) stretch occupies residues 185–255 (NVKDLSTIVT…VAEHALDLLD (71 aa)). Positions 258-334 (GEGFDYMDRK…YLHFGMIKPE (77 aa)) are head domain (RuvB-H). Residues arginine 294, arginine 313, and arginine 318 each contribute to the DNA site.

It belongs to the RuvB family. Homohexamer. Forms an RuvA(8)-RuvB(12)-Holliday junction (HJ) complex. HJ DNA is sandwiched between 2 RuvA tetramers; dsDNA enters through RuvA and exits via RuvB. An RuvB hexamer assembles on each DNA strand where it exits the tetramer. Each RuvB hexamer is contacted by two RuvA subunits (via domain III) on 2 adjacent RuvB subunits; this complex drives branch migration. In the full resolvosome a probable DNA-RuvA(4)-RuvB(12)-RuvC(2) complex forms which resolves the HJ.

The protein resides in the cytoplasm. The catalysed reaction is ATP + H2O = ADP + phosphate + H(+). The RuvA-RuvB-RuvC complex processes Holliday junction (HJ) DNA during genetic recombination and DNA repair, while the RuvA-RuvB complex plays an important role in the rescue of blocked DNA replication forks via replication fork reversal (RFR). RuvA specifically binds to HJ cruciform DNA, conferring on it an open structure. The RuvB hexamer acts as an ATP-dependent pump, pulling dsDNA into and through the RuvAB complex. RuvB forms 2 homohexamers on either side of HJ DNA bound by 1 or 2 RuvA tetramers; 4 subunits per hexamer contact DNA at a time. Coordinated motions by a converter formed by DNA-disengaged RuvB subunits stimulates ATP hydrolysis and nucleotide exchange. Immobilization of the converter enables RuvB to convert the ATP-contained energy into a lever motion, pulling 2 nucleotides of DNA out of the RuvA tetramer per ATP hydrolyzed, thus driving DNA branch migration. The RuvB motors rotate together with the DNA substrate, which together with the progressing nucleotide cycle form the mechanistic basis for DNA recombination by continuous HJ branch migration. Branch migration allows RuvC to scan DNA until it finds its consensus sequence, where it cleaves and resolves cruciform DNA. The protein is Holliday junction branch migration complex subunit RuvB of Shewanella sp. (strain MR-4).